We begin with the raw amino-acid sequence, 240 residues long: ATP-dependent dethiobiotin synthetase BioD (240 aa).

ATP is bound at residue 15–20 (EIGKTF). Threonine 19 is a Mg(2+) binding site. Lysine 40 is a catalytic residue. ATP-binding positions include aspartate 57, 118–121 (EGVG), and 178–179 (NR). 2 residues coordinate Mg(2+): aspartate 57 and glutamate 118.

This sequence belongs to the dethiobiotin synthetase family. In terms of assembly, homodimer. The cofactor is Mg(2+).

It localises to the cytoplasm. It catalyses the reaction (7R,8S)-7,8-diammoniononanoate + CO2 + ATP = (4R,5S)-dethiobiotin + ADP + phosphate + 3 H(+). The protein operates within cofactor biosynthesis; biotin biosynthesis; biotin from 7,8-diaminononanoate: step 1/2. Catalyzes a mechanistically unusual reaction, the ATP-dependent insertion of CO2 between the N7 and N8 nitrogen atoms of 7,8-diaminopelargonic acid (DAPA, also called 7,8-diammoniononanoate) to form a ureido ring. This chain is ATP-dependent dethiobiotin synthetase BioD, found in Burkholderia thailandensis (strain ATCC 700388 / DSM 13276 / CCUG 48851 / CIP 106301 / E264).